A 264-amino-acid chain; its full sequence is Tryptophan synthase alpha chain (264 aa).

Catalysis depends on proton acceptor residues E45 and D56.

This sequence belongs to the TrpA family. As to quaternary structure, tetramer of two alpha and two beta chains.

The enzyme catalyses (1S,2R)-1-C-(indol-3-yl)glycerol 3-phosphate + L-serine = D-glyceraldehyde 3-phosphate + L-tryptophan + H2O. The protein operates within amino-acid biosynthesis; L-tryptophan biosynthesis; L-tryptophan from chorismate: step 5/5. The alpha subunit is responsible for the aldol cleavage of indoleglycerol phosphate to indole and glyceraldehyde 3-phosphate. This Leptospira borgpetersenii serovar Hardjo-bovis (strain JB197) protein is Tryptophan synthase alpha chain.